A 466-amino-acid polypeptide reads, in one-letter code: Tyrosinase HcTyr1 (466 aa).

The Cu cation site is built by H43, H78, H87, H211, H215, and H238.

This sequence belongs to the tyrosinase family. In terms of assembly, monomer. Formation of a dimer is observed when the protein is in its holo-form. Cu(2+) serves as cofactor. Post-translationally, in vitro, the C-terminal lid-domain is slowly cleaved off in an autoprocessive time dependent manner, leading to the formation of cleaved-HcTyr1. The processing rate is not influenced by factors such as pH and added metal ions.

The catalysed reaction is L-tyrosine + O2 = L-dopaquinone + H2O. The enzyme catalyses 2 L-tyrosine + O2 = 2 L-dopa. It catalyses the reaction 2 L-dopa + O2 = 2 L-dopaquinone + 2 H2O. Cleavage of the lid-domain increases activity levels, affinity for substrate and turnover rate. Exhibits high saline tolerance. In terms of biological role, copper-containing oxidase that catalyzes the conversion of L-tyrosine to L-dopa and then to L-dopaquinone. Can use various phenols such as p-coumaric acid, phenol, pyrocatechol, syringol or pyrogallol. Accepts several of the constituents of lignin and potentially participates in lignin functionalization. In Hahella sp. (strain CCB-MM4), this protein is Tyrosinase HcTyr1.